The primary structure comprises 321 residues: Putative ribose-phosphate pyrophosphokinase 2 (321 aa).

ATP contacts are provided by residues 41-43 (DGE) and 100-101 (RQ). A Mg(2+)-binding site is contributed by histidine 134. D-ribose 5-phosphate contacts are provided by residues aspartate 223 and 227–231 (NTGVT).

It belongs to the ribose-phosphate pyrophosphokinase family. Class I subfamily. Homohexamer. Mg(2+) is required as a cofactor.

The protein resides in the cytoplasm. The catalysed reaction is D-ribose 5-phosphate + ATP = 5-phospho-alpha-D-ribose 1-diphosphate + AMP + H(+). The protein operates within metabolic intermediate biosynthesis; 5-phospho-alpha-D-ribose 1-diphosphate biosynthesis; 5-phospho-alpha-D-ribose 1-diphosphate from D-ribose 5-phosphate (route I): step 1/1. Its function is as follows. Involved in the biosynthesis of the central metabolite phospho-alpha-D-ribosyl-1-pyrophosphate (PRPP) via the transfer of pyrophosphoryl group from ATP to 1-hydroxyl of ribose-5-phosphate (Rib-5-P). This chain is Putative ribose-phosphate pyrophosphokinase 2, found in Lactococcus lactis subsp. lactis (strain IL1403) (Streptococcus lactis).